The sequence spans 379 residues: MEQRDYYELLEVSRNASDAEIKKAYRRLAMKYHPDRNPGDTSAEEKFKEIQKAYNILSDKQKRAAYDQFGHAGVDPSMGGGPGGFGGFGGFGDVFEDIFENIFSGGRGQGRQSRGQRGADLQFNVQLTLEEAAIGKEVEITVPRHGTCTVCEGSGAKKGTSPKTCETCQGMGQVRIQQGFFSIQQTCPTCHGEGKIISDPCASCHGQGRVRESKKINVKIPAGVDNGDRVRLSGEGEAGVHGGGSGDLYVQISLKKHAIFERHENDLHCEVPISFATAALGGSIEVPTLEGRVTLKIPAETQTGKVFRLRSKGMKSVRGYGQGDLLCKVVVETPVNLSREQKELLNKLQDSLENAKGTHSPKTSSWFAGVKKFFEDMKF.

The 66-residue stretch at 5 to 70 (DYYELLEVSR…QKRAAYDQFG (66 aa)) folds into the J domain. A CR-type zinc finger spans residues 135 to 213 (GKEVEITVPR…CHGQGRVRES (79 aa)). Zn(2+) contacts are provided by cysteine 148, cysteine 151, cysteine 165, cysteine 168, cysteine 187, cysteine 190, cysteine 201, and cysteine 204. CXXCXGXG motif repeat units lie at residues 148 to 155 (CTVCEGSG), 165 to 172 (CETCQGMG), 187 to 194 (CPTCHGEG), and 201 to 208 (CASCHGQG).

Belongs to the DnaJ family. As to quaternary structure, homodimer. Requires Zn(2+) as cofactor.

It localises to the cytoplasm. Functionally, participates actively in the response to hyperosmotic and heat shock by preventing the aggregation of stress-denatured proteins and by disaggregating proteins, also in an autonomous, DnaK-independent fashion. Unfolded proteins bind initially to DnaJ; upon interaction with the DnaJ-bound protein, DnaK hydrolyzes its bound ATP, resulting in the formation of a stable complex. GrpE releases ADP from DnaK; ATP binding to DnaK triggers the release of the substrate protein, thus completing the reaction cycle. Several rounds of ATP-dependent interactions between DnaJ, DnaK and GrpE are required for fully efficient folding. Also involved, together with DnaK and GrpE, in the DNA replication of plasmids through activation of initiation proteins. The sequence is that of Chaperone protein DnaJ from Legionella pneumophila (strain Lens).